The primary structure comprises 276 residues: Phosphonates import ATP-binding protein PhnC (276 aa).

The ABC transporter domain occupies 2–246 (LEIHNLQKSY…VLTRIYGAED (245 aa)). ATP is bound at residue 35–42 (GPSGAGKS).

The protein belongs to the ABC transporter superfamily. Phosphonates importer (TC 3.A.1.9.1) family. As to quaternary structure, the complex is composed of two ATP-binding proteins (PhnC), two transmembrane proteins (PhnE) and a solute-binding protein (PhnD).

It is found in the cell inner membrane. It catalyses the reaction phosphonate(out) + ATP + H2O = phosphonate(in) + ADP + phosphate + H(+). Part of the ABC transporter complex PhnCDE involved in phosphonates import. Responsible for energy coupling to the transport system. This is Phosphonates import ATP-binding protein PhnC from Alcaligenes faecalis.